The chain runs to 110 residues: UPF0060 membrane protein Noc_2955 (110 aa).

Helical transmembrane passes span 7–27 (VGLFLITALAEIAGCYLAYLW), 33–53 (TIWLLVPCALSLVAFVWLLSL), 63–83 (AAYGGVYIVMAILWLWVVNGI), and 87–107 (TWDLVGSAIALLGMAIIMFAP).

This sequence belongs to the UPF0060 family.

It localises to the cell inner membrane. The chain is UPF0060 membrane protein Noc_2955 from Nitrosococcus oceani (strain ATCC 19707 / BCRC 17464 / JCM 30415 / NCIMB 11848 / C-107).